The sequence spans 499 residues: Proline dehydrogenase 1, mitochondrial (499 aa).

Residues 1 to 72 (MATRLLRTNF…LDLSDQARLF (72 aa)) constitute a mitochondrion transit peptide.

The protein belongs to the proline oxidase family. It depends on FAD as a cofactor. In terms of tissue distribution, ubiquitous. Highest expression in pollen grains, in the stigma and in developing embryos.

It localises to the mitochondrion. It carries out the reaction L-proline + a quinone = (S)-1-pyrroline-5-carboxylate + a quinol + H(+). It participates in amino-acid degradation; L-proline degradation into L-glutamate; L-glutamate from L-proline: step 1/2. Functionally, converts proline to delta-1-pyrroline-5-carboxylate. The protein is Proline dehydrogenase 1, mitochondrial (POX1) of Arabidopsis thaliana (Mouse-ear cress).